The following is a 101-amino-acid chain: Large ribosomal subunit protein bL28 (101 aa).

The protein belongs to the bacterial ribosomal protein bL28 family.

The sequence is that of Large ribosomal subunit protein bL28 from Methylorubrum extorquens (strain CM4 / NCIMB 13688) (Methylobacterium extorquens).